Here is a 614-residue protein sequence, read N- to C-terminus: Phosphomethylpyrimidine synthase (614 aa).

Residues Asn230, Met259, Tyr288, His324, 344–346, 385–388, and Glu424 each bind substrate; these read SRG and DGLR. Zn(2+) is bound at residue His428. Residue Tyr451 coordinates substrate. Zn(2+) is bound at residue His492. Positions 572, 575, and 580 each coordinate [4Fe-4S] cluster.

It belongs to the ThiC family. In terms of assembly, homodimer. [4Fe-4S] cluster serves as cofactor.

It catalyses the reaction 5-amino-1-(5-phospho-beta-D-ribosyl)imidazole + S-adenosyl-L-methionine = 4-amino-2-methyl-5-(phosphooxymethyl)pyrimidine + CO + 5'-deoxyadenosine + formate + L-methionine + 3 H(+). It functions in the pathway cofactor biosynthesis; thiamine diphosphate biosynthesis. In terms of biological role, catalyzes the synthesis of the hydroxymethylpyrimidine phosphate (HMP-P) moiety of thiamine from aminoimidazole ribotide (AIR) in a radical S-adenosyl-L-methionine (SAM)-dependent reaction. This is Phosphomethylpyrimidine synthase from Stenotrophomonas maltophilia (strain K279a).